A 399-amino-acid chain; its full sequence is Endonuclease III homolog 1 (399 aa).

Residues 1-26 (MQKISKYSSMAILRKRPLVKTETGPE) constitute a mitochondrion transit peptide. Positions 14–37 (RKRPLVKTETGPESELLPEKRTKI) match the Bipartite nuclear localization signal motif. K194 is covalently cross-linked (Glycyl lysine isopeptide (Lys-Gly) (interchain with G-Cter in SUMO)). The HhH domain maps to 223–247 (FSSDVPATINELLGLPGVGPKMAYL). K243 serves as the catalytic Nucleophile; for N-glycosylase activity.

This sequence belongs to the Nth/MutY family. In terms of processing, monosumoylated. Sumoylation is associated with targeting of NTG1 to nuclei containing oxidative DNA damage.

It is found in the nucleus. It localises to the mitochondrion. The catalysed reaction is 2'-deoxyribonucleotide-(2'-deoxyribose 5'-phosphate)-2'-deoxyribonucleotide-DNA = a 3'-end 2'-deoxyribonucleotide-(2,3-dehydro-2,3-deoxyribose 5'-phosphate)-DNA + a 5'-end 5'-phospho-2'-deoxyribonucleoside-DNA + H(+). Its function is as follows. Bifunctional DNA N-glycosylase with associated apurinic/apyrimidinic (AP) lyase function that catalyzes the first step in base excision repair (BER), the primary repair pathway for the repair of oxidative DNA damage. The DNA N-glycosylase activity releases the damaged DNA base from DNA by cleaving the N-glycosidic bond, leaving an AP site. The AP-lyase activity cleaves the phosphodiester bond 3' to the AP site by a beta-elimination. Primarily recognizes and repairs oxidative base damage of pyrimidines, but also purine-derived lesions, alkylation damage and cytosine photoproducts generated by UV irradiation as well as abasic sites. Also has 8-oxoguanine DNA glycosylase activity. The AP lyase can incise AP sites opposite all four bases. May also play a role in the regulation of mtDNA copy number by introducing a double-stranded break (DSB) at the mtDNA replication origin ori5, initiating the rolling-circle mtDNA replication. In Saccharomyces cerevisiae (strain ATCC 204508 / S288c) (Baker's yeast), this protein is Endonuclease III homolog 1.